Here is a 495-residue protein sequence, read N- to C-terminus: MTGNLVTKNSLTPDVRNGIDFKIADLSLADFGRKELRIAEHEMPGLMSLRREYAEVQPLKGARISGSLHMTVQTAVLIETLTALGAEVRWASCNIFSTQDHAAAAVVVGPHGTPDEPKGVPVFAWKGETLEEYWWAAEQMLTWPDPDKPANMILDDGGDATMLVLRGMQYEKAGVVPPAEEDDPAEWKVFLNLLRTRFETDKDKWTKIAESVKGVTEETTTGVLRLYQFAAAGDLAFPAINVNDSVTKSKFDNKYGTRHSLIDGINRGTDALIGGKKVLICGYGDVGKGCAEAMKGQGARVSVTEIDPINALQAMMEGFDVVTVEEAIGDADIVVTATGNKDIIMLEHIKAMKDHAILGNIGHFDNEIDMAGLERSGATRVNVKPQVDLWTFGDTGRSIIVLSEGRLLNLGNATGHPSFVMSNSFANQTIAQIELWTKNDEYDNEVYRLPKHLDEKVARIHVEALGGHLTKLTKEQAEYLGVDVEGPYKPDHYRY.

Substrate-binding residues include threonine 71, aspartate 156, and glutamate 218. 219–221 (TTT) is an NAD(+) binding site. The substrate site is built by lysine 248 and aspartate 252. NAD(+) is bound by residues asparagine 253, 282-287 (GYGDVG), glutamate 305, asparagine 340, 361-363 (IGH), and asparagine 409.

It belongs to the adenosylhomocysteinase family. Requires NAD(+) as cofactor.

It localises to the cytoplasm. It catalyses the reaction S-adenosyl-L-homocysteine + H2O = L-homocysteine + adenosine. It functions in the pathway amino-acid biosynthesis; L-homocysteine biosynthesis; L-homocysteine from S-adenosyl-L-homocysteine: step 1/1. May play a key role in the regulation of the intracellular concentration of adenosylhomocysteine. In Mycobacterium tuberculosis (strain ATCC 25177 / H37Ra), this protein is Adenosylhomocysteinase.